We begin with the raw amino-acid sequence, 578 residues long: Proteasome-associated ATPase (578 aa).

The stretch at 35–84 forms a coiled coil; sequence RHLTALEEQLGAARTRLAQVSAQNDRLATTLREARDQIVALKAEVDRLGQ. 266 to 271 is an ATP binding site; sequence GCGKTL. Residues 577-578 form a docks into pockets in the proteasome alpha-ring region; it reads YL.

The protein belongs to the AAA ATPase family. Homohexamer. Assembles into a hexameric ring structure that caps the 20S proteasome core. Strongly interacts with the prokaryotic ubiquitin-like protein Pup through a hydrophobic interface; the interacting region of ARC lies in its N-terminal coiled-coil domain. There is one Pup binding site per ARC hexamer ring. Upon ATP-binding, the C-terminus of ARC interacts with the alpha-rings of the proteasome core, possibly by binding to the intersubunit pockets.

It participates in protein degradation; proteasomal Pup-dependent pathway. ATPase which is responsible for recognizing, binding, unfolding and translocation of pupylated proteins into the bacterial 20S proteasome core particle. May be essential for opening the gate of the 20S proteasome via an interaction with its C-terminus, thereby allowing substrate entry and access to the site of proteolysis. Thus, the C-termini of the proteasomal ATPase may function like a 'key in a lock' to induce gate opening and therefore regulate proteolysis. The sequence is that of Proteasome-associated ATPase from Kineococcus radiotolerans (strain ATCC BAA-149 / DSM 14245 / SRS30216).